A 1030-amino-acid polypeptide reads, in one-letter code: MAFTNYSSLNRAQLTFEYLHTNSTTHEFLFGALAELVDNARDADATRIDIYAERREDLRGGFMLCFLDDGAGMDPSDAASVIQFGKSAKRTPESTQIGQYGNGLKSGSMRIGKDFILFTKKEDTMTCLFLSRTFHEEEGIDEVIVPLPTWNARTREPITDNVEKFAIETELVYKYSPFHTEEQVMNQFMKIPGNSGTLVIIFNLKLMDNGEPELDIISNPKDIQMAETSPEGTKPERRSFRAYAAVLYIDPRMRIFIHGHKVQTKRLSCCLYKPRMYKYTSSRFKTRAEQEVKKAEHVARIAEEKAREAESKARTLEVRMGGDLTRDSRVMLRQVQNTAITLRREADVKKRIKDAKQRALKEPKELNFVFGVNIEHRDLDGMFIYNCSRLIKMYEKVGPQLEGGMACGGVVGVVDVPYLVLEPTHNKQDFADAKEYRHLLRAMGEHLAQYWKDIAIAQRGIIKFWDEFGYLSANWNQPPSSELRFKRRRAMEIPTTIQCDLCLKWRTLPFQLSSVETDYPDTWVCSMNPDPEQDRCEASEQKQKVPLGTLKKDPKTQEEKQKQLTEKIRQQQEKLEALQKTTPIRSQADLKKLPLEVTTRPIEEPVRRPQRPRSPPLPAVIKNAPSRPPSIQTPRPSTQLRKTSVISLPKPPTTAARGETSTSRLLQPTEAPRKPANPPIKTVPRPTPPVHTPPLSLIPSSKSLREVPAQKAIKTPVVKKPEPPVKQSVATSGRKRSLAVSDEEEAEEEAEKRRERCKRGKLAVKEEKKEANELSDSAGEDHPAELRKAQKDKGLHVEVRVNREWYTGRVTAVEVGKNAVRWKVKFDYVPTDTTPRDRWVEKGSEDVRLMKPPSPEHQSPDTQQEGGEEEEAMVARQAVALPEPSTSDGLPIEPDTTATSPSHETIDLLVQILRNCLRYFLPPSFPISKKELSVMNSEELISFPLKEYFKQYEVGLQNLCHSYQSRADSRAKASEESLRTSEKKLRETEEKLQKLRTNIVALLQKVQEDIDINTDDELDAYIEDLITKGD.

Position 2 is an N-acetylalanine (Ala-2). Residues Asn-39, 87–89 (SAK), and 99–105 (QYGNGLK) contribute to the ATP site. Asn-39 lines the Mg(2+) pocket. Positions 285 to 362 (KTRAEQEVKK…KDAKQRALKE (78 aa)) form a coiled coil. Lys-427 contributes to the ATP binding site. A CW-type zinc finger spans residues 490 to 544 (AMEIPTTIQCDLCLKWRTLPFQLSSVETDYPDTWVCSMNPDPEQDRCEASEQKQK). Zn(2+) contacts are provided by Cys-499, Cys-502, Cys-525, and Cys-536. Residues 530-791 (DPEQDRCEAS…HPAELRKAQK (262 aa)) form a disordered region. Basic and acidic residues-rich tracts occupy residues 532-543 (EQDRCEASEQKQ) and 550-577 (LKKD…KLEA). The stretch at 555 to 583 (KTQEEKQKQLTEKIRQQQEKLEALQKTTP) forms a coiled coil. The residue at position 582 (Thr-582) is a Phosphothreonine. Ser-614 carries the post-translational modification Phosphoserine. A compositionally biased stretch (polar residues) spans 629–646 (PSIQTPRPSTQLRKTSVI). Glycyl lysine isopeptide (Lys-Gly) (interchain with G-Cter in SUMO2) cross-links involve residues Lys-650 and Lys-702. Low complexity predominate over residues 693 to 702 (PPLSLIPSSK). Phosphoserine is present on Ser-703. Residue Lys-714 forms a Glycyl lysine isopeptide (Lys-Gly) (interchain with G-Cter in SUMO2) linkage. Ser-728 is subject to Phosphoserine. Thr-731 is subject to Phosphothreonine. Ser-737 and Ser-741 each carry phosphoserine. A coiled-coil region spans residues 738 to 775 (LAVSDEEEAEEEAEKRRERCKRGKLAVKEEKKEANELS). Residues 763 to 772 (AVKEEKKEAN) are compositionally biased toward basic and acidic residues. Lys-765 is covalently cross-linked (Glycyl lysine isopeptide (Lys-Gly) (interchain with G-Cter in SUMO2)). Phosphoserine is present on residues Ser-775 and Ser-777. Residues 779 to 791 (GEDHPAELRKAQK) are compositionally biased toward basic and acidic residues. Lys-817 participates in a covalent cross-link: Glycyl lysine isopeptide (Lys-Gly) (interchain with G-Cter in SUMO2). Thr-834 carries the post-translational modification Phosphothreonine. The segment covering 837–849 (DRWVEKGSEDVRL) has biased composition (basic and acidic residues). 2 disordered regions span residues 837–874 (DRWV…EAMV) and 882–901 (PEPS…ATSP). A phosphoserine mark is found at Ser-854 and Ser-859. The span at 856-865 (EHQSPDTQQE) shows a compositional bias: polar residues. Lys-930 participates in a covalent cross-link: Glycyl lysine isopeptide (Lys-Gly) (interchain with G-Cter in SUMO2). Positions 966–1011 (RADSRAKASEESLRTSEKKLRETEEKLQKLRTNIVALLQKVQEDID) form a coiled coil.

Homodimerizes upon ATP-binding and dissociate upon ATP hydrolysis; homodimerization is required for gene silencing. Binds histone H3 independently of the methylation status at 'Lys-9'. Interacts with HDAC4. Interacts with FAM208A/TASOR and MPHOSPH8; the interactions associate MORC2 with the HUSH complex which recruits MORC2 to heterochromatic loci. Interacts with Morc2b. In terms of processing, phosphorylated by PAK1 at Ser-737 upon DNA damage. Phosphorylation is required for ATPase activity and recruitment to damaged chromatin. Expressed in the axons and Schwann cells of peripheral nerves. Expressed in testes.

It is found in the nucleus. The protein localises to the cytoplasm. It localises to the cytosol. Its subcellular location is the chromosome. The protein resides in the nucleus matrix. It carries out the reaction ATP + H2O = ADP + phosphate + H(+). Its activity is regulated as follows. ATPase activity is dependent of phosphorylation by PAK1 and presence of DNA. In terms of biological role, essential for epigenetic silencing by the HUSH complex. Recruited by HUSH to target site in heterochromatin, the ATPase activity and homodimerization are critical for HUSH-mediated silencing. Represses germ cell-related genes and L1 retrotransposons in collaboration with SETDB1 and the HUSH complex, the silencing is dependent of repressive epigenetic modifications, such as H3K9me3 mark. Silencing events often occur within introns of transcriptionally active genes, and lead to the down-regulation of host gene expression. During DNA damage response, regulates chromatin remodeling through ATP hydrolysis. During DNA damage response, may regulate chromatin remodeling through ATP hydrolysis. The chain is ATPase MORC2A from Mus musculus (Mouse).